Here is a 171-residue protein sequence, read N- to C-terminus: Cadmium-induced protein AS8 (171 aa).

This chain is Cadmium-induced protein AS8, found in Arabidopsis thaliana (Mouse-ear cress).